We begin with the raw amino-acid sequence, 420 residues long: Serine/threonine-protein phosphatase 4 regulatory subunit 2-A (420 aa).

The segment at 157–420 (GNTSAFPDRN…ETADDNMEQD (264 aa)) is disordered. Residues 182-195 (SLSSNVATNGLPDS) are compositionally biased toward polar residues. Residues 196-210 (TESKEQASEQSERTV) show a composition bias toward basic and acidic residues. Residues 212–224 (ESSASEAESHSGA) are compositionally biased toward low complexity. Positions 229–250 (HRDDEDATHAETHEAKRLKFDK) are enriched in basic and acidic residues. Positions 251 to 266 (EEEEEEDDEEEDEDGD) are enriched in acidic residues. A compositionally biased stretch (basic and acidic residues) spans 267–276 (EIKKELDEPH). The span at 278–296 (PCTSVAESSSDVPQSSTDV) shows a compositional bias: polar residues. The span at 318 to 332 (GVDRSTSEDSPDPSH) shows a compositional bias: basic and acidic residues. Positions 346 to 364 (AEEEEEEESAEAQETEETN) are enriched in acidic residues. Positions 368–394 (SSSSNNSSDEGVSSAETPSASPSSSTE) are enriched in low complexity. Over residues 411-420 (ETADDNMEQD) the composition is skewed to acidic residues.

It belongs to the PPP4R2 family. As to quaternary structure, serine/threonine-protein phosphatase 4 (PP4) occurs in different assemblies of the catalytic and one or more regulatory subunits.

Regulatory subunit of serine/threonine-protein phosphatase 4 (PP4C). The chain is Serine/threonine-protein phosphatase 4 regulatory subunit 2-A (ppp4r2a) from Danio rerio (Zebrafish).